Reading from the N-terminus, the 530-residue chain is T-box transcription factor TBX21 (530 aa).

Residues 1 to 55 are disordered; the sequence is MGIVEPGCGDMLTGTEPMPSDEGRGPGADQQHRFFYPEPGAQDPTDRRAGSSLGT. Serine 52 is subject to Phosphoserine. Residue threonine 55 is modified to Phosphothreonine. Residues tyrosine 76 and tyrosine 117 each carry the phosphotyrosine modification. The segment at residues 140 to 325 is a DNA-binding region (T-box); it reads LSNHLLWSKF…NNPFAKGFRE (186 aa). A Phosphotyrosine; by ABL1 modification is found at tyrosine 219. Serine 224 bears the Phosphoserine mark. Tyrosine 265 carries the phosphotyrosine; by ABL1 modification. Position 302 is a phosphothreonine (threonine 302). The residue at position 304 (tyrosine 304) is a Phosphotyrosine; by ABL1. Lysine 313 is covalently cross-linked (Glycyl lysine isopeptide (Lys-Gly) (interchain with G-Cter in ubiquitin)). The segment at 444-530 is disordered; that stretch reads AGWFRPMRTL…EGQFYNYFPN (87 aa). Residues 462-482 are compositionally biased toward polar residues; that stretch reads SEEQGSSPSLWPEVTSLQPEP. Residues 498-515 are compositionally biased toward low complexity; it reads SPYPSSGDSSSPAGAPSP. Position 508 is a phosphoserine (serine 508). Position 525 is a phosphotyrosine; by ITK (tyrosine 525).

As to quaternary structure, interacts with RUNX1 and RUNX3. Interacts with ITK. The phosphorylated form (at Tyr-525) interacts with GATA3. Interacts with ABL1. Interacts with RELA. The phosphorylated form (at Thr-302) interacts with NFATC2. Interacts with KDM6B. Interacts with SMARCA4 in a KDM6B-dependent manner. Interacts with CCTN1 and CDK9. Interacts with USP10. In terms of processing, phosphorylations at Ser-52, Tyr-76, Ser-224 and Ser-508 are regulated by mTORC1. Phosphorylation at Tyr-525 is essential for its interaction GATA3. Phosphorylation at Tyr-219, Tyr-265 and Tyr-304 enhances its transcriptional activator activity. Phosphorylation at Thr-302 is required for its interaction with NFATC2. Post-translationally, ubiquitinated at Lys-313, leading to its degradation by the proteasome. Ubiquitination is essential for controlling protein stability, binding to the T-box-binding element of the IFN-gamma promoter, and for interaction with NFATC2 through induction of phosphorylation at Thr-302. Deubiquitinated by USP10 leading to its stabilization. As to expression, T-cell specific. Expressed in regulatory T (TReg) cells.

The protein localises to the nucleus. In terms of biological role, lineage-defining transcription factor which initiates Th1 lineage development from naive Th precursor cells both by activating Th1 genetic programs and by repressing the opposing Th2 and Th17 genetic programs. Activates transcription of a set of genes important for Th1 cell function, including those encoding IFN-gamma and the chemokine receptor CXCR3. Activates IFNG and CXCR3 genes in part by recruiting chromatin remodeling complexes including KDM6B, a SMARCA4-containing SWI/SNF-complex, and an H3K4me2-methyltransferase complex to their promoters and all of these complexes serve to establish a more permissive chromatin state conducive with transcriptional activation. Can activate Th1 genes also via recruitment of Mediator complex and P-TEFb (composed of CDK9 and CCNT1/cyclin-T1) in the form of the super elongation complex (SEC) to super-enhancers and associated genes in activated Th1 cells. Inhibits the Th17 cell lineage commitment by blocking RUNX1-mediated transactivation of Th17 cell-specific transcriptinal regulator RORC. Inhibits the Th2 cell lineage commitment by suppressing the production of Th2 cytokines, such as IL-4, IL-5, and IL- 13, via repression of transcriptional regulators GATA3 and NFATC2. Protects Th1 cells from amplifying aberrant type-I IFN response in an IFN-gamma abundant microenvironment by acting as a repressor of type-I IFN transcription factors and type-I IFN- stimulated genes. Acts as a regulator of antiviral B-cell responses; controls chronic viral infection by promoting the antiviral antibody IgG2a isotype switching and via regulation of a broad antiviral gene expression program. The protein is T-box transcription factor TBX21 (Tbx21) of Mus musculus (Mouse).